Here is a 145-residue protein sequence, read N- to C-terminus: 6-pyruvoyl tetrahydrobiopterin synthase (145 aa).

Ser19 is modified (phosphoserine; by PKG). His24 contacts Zn(2+). Ser28 is modified (phosphoserine). The Proton acceptor role is filled by Cys43. His49 and His51 together coordinate Zn(2+). His90 (charge relay system) is an active-site residue. Tyr128 carries the post-translational modification Phosphotyrosine. The active-site Charge relay system is the Glu134.

This sequence belongs to the PTPS family. In terms of assembly, homohexamer formed of two homotrimers in a head to head fashion. It depends on Zn(2+) as a cofactor. In terms of processing, phosphorylation of Ser-19 is required for maximal enzyme activity.

The enzyme catalyses 7,8-dihydroneopterin 3'-triphosphate = 6-pyruvoyl-5,6,7,8-tetrahydropterin + triphosphate + H(+). Its pathway is cofactor biosynthesis; tetrahydrobiopterin biosynthesis; tetrahydrobiopterin from 7,8-dihydroneopterin triphosphate: step 1/3. Functionally, involved in the biosynthesis of tetrahydrobiopterin, an essential cofactor of aromatic amino acid hydroxylases. Catalyzes the transformation of 7,8-dihydroneopterin triphosphate into 6-pyruvoyl tetrahydropterin. The polypeptide is 6-pyruvoyl tetrahydrobiopterin synthase (PTS) (Homo sapiens (Human)).